A 315-amino-acid chain; its full sequence is Cytosolic Fe-S cluster assembly factor nubp1-A (315 aa).

The tract at residues 1–23 (MADIPDNAPQHCPGTDSTEAGKS) is disordered. Residues cysteine 12, cysteine 26, cysteine 29, and cysteine 35 each contribute to the [4Fe-4S] cluster site. 66-73 (GKGGVGKS) is a binding site for ATP. Cysteine 239 and cysteine 242 together coordinate [4Fe-4S] cluster.

The protein belongs to the Mrp/NBP35 ATP-binding proteins family. NUBP1/NBP35 subfamily. As to quaternary structure, heterotetramer of 2 nubp1 and 2 nubp2 chains. [4Fe-4S] cluster serves as cofactor.

It localises to the cytoplasm. Component of the cytosolic iron-sulfur (Fe/S) protein assembly (CIA) machinery. Required for maturation of extramitochondrial Fe-S proteins. The nubp1-nubp2 heterotetramer forms a Fe-S scaffold complex, mediating the de novo assembly of an Fe-S cluster and its transfer to target apoproteins. The chain is Cytosolic Fe-S cluster assembly factor nubp1-A (nubp1-A) from Xenopus laevis (African clawed frog).